A 126-amino-acid polypeptide reads, in one-letter code: Arginine decarboxylase proenzyme (126 aa).

The Schiff-base intermediate with substrate; via pyruvic acid role is filled by Ser74. At Ser74 the chain carries Pyruvic acid (Ser); by autocatalysis. Residue His79 is the Proton acceptor; for processing activity of the active site. Catalysis depends on Cys94, which acts as the Proton donor; for catalytic activity.

Belongs to the prokaryotic AdoMetDC family. Type 1 subfamily. As to quaternary structure, heterooctamer of four alpha and four beta chains arranged as a tetramer of alpha/beta heterodimers. Pyruvate is required as a cofactor. Post-translationally, is synthesized initially as an inactive proenzyme. Formation of the active enzyme involves a self-maturation process in which the active site pyruvoyl group is generated from an internal serine residue via an autocatalytic post-translational modification. Two non-identical subunits are generated from the proenzyme in this reaction, and the pyruvate is formed at the N-terminus of the alpha chain, which is derived from the carboxyl end of the proenzyme. The post-translation cleavage follows an unusual pathway, termed non-hydrolytic serinolysis, in which the side chain hydroxyl group of the serine supplies its oxygen atom to form the C-terminus of the beta chain, while the remainder of the serine residue undergoes an oxidative deamination to produce ammonia and the pyruvoyl group blocking the N-terminus of the alpha chain.

It catalyses the reaction L-arginine + H(+) = agmatine + CO2. The protein operates within amine and polyamine biosynthesis; agmatine biosynthesis; agmatine from L-arginine: step 1/1. Specifically catalyzes the decarboxylation of L-arginine to agmatine. Has no S-adenosylmethionine decarboxylase (AdoMetDC) activity. The sequence is that of Arginine decarboxylase proenzyme from Pyrobaculum calidifontis (strain DSM 21063 / JCM 11548 / VA1).